Reading from the N-terminus, the 216-residue chain is Octanoyltransferase (216 aa).

The 184-residue stretch at 33 to 216 folds into the BPL/LPL catalytic domain; sequence AQTADELWIV…AEKLTRHLSG (184 aa). Substrate-binding positions include 72–79, 148–150, and 162–164; these read RGGEVTYH, ALG, and GVS. Cysteine 180 serves as the catalytic Acyl-thioester intermediate.

The protein belongs to the LipB family.

Its subcellular location is the cytoplasm. It catalyses the reaction octanoyl-[ACP] + L-lysyl-[protein] = N(6)-octanoyl-L-lysyl-[protein] + holo-[ACP] + H(+). It participates in protein modification; protein lipoylation via endogenous pathway; protein N(6)-(lipoyl)lysine from octanoyl-[acyl-carrier-protein]: step 1/2. Catalyzes the transfer of endogenously produced octanoic acid from octanoyl-acyl-carrier-protein onto the lipoyl domains of lipoate-dependent enzymes. Lipoyl-ACP can also act as a substrate although octanoyl-ACP is likely to be the physiological substrate. This Herminiimonas arsenicoxydans protein is Octanoyltransferase.